A 279-amino-acid polypeptide reads, in one-letter code: Pantothenate synthetase (279 aa).

Met26–His33 serves as a coordination point for ATP. His33 serves as the catalytic Proton donor. Gln57 provides a ligand contact to (R)-pantoate. Gln57 serves as a coordination point for beta-alanine. Gly147–Asp150 lines the ATP pocket. (R)-pantoate is bound at residue Gln153. Residues Ile176 and Glu184–Arg187 each bind ATP.

It belongs to the pantothenate synthetase family. In terms of assembly, homodimer.

The protein resides in the cytoplasm. The enzyme catalyses (R)-pantoate + beta-alanine + ATP = (R)-pantothenate + AMP + diphosphate + H(+). Its pathway is cofactor biosynthesis; (R)-pantothenate biosynthesis; (R)-pantothenate from (R)-pantoate and beta-alanine: step 1/1. In terms of biological role, catalyzes the condensation of pantoate with beta-alanine in an ATP-dependent reaction via a pantoyl-adenylate intermediate. The protein is Pantothenate synthetase of Corynebacterium glutamicum (strain R).